A 138-amino-acid polypeptide reads, in one-letter code: Small ribosomal subunit protein uS11c (138 aa).

The segment at 1–22 (MAKSIPRISSRRNGPIGSGKTV) is disordered.

Belongs to the universal ribosomal protein uS11 family. Part of the 30S ribosomal subunit.

The protein resides in the plastid. The polypeptide is Small ribosomal subunit protein uS11c (Cuscuta exaltata (Tall dodder)).